The sequence spans 306 residues: Homoserine O-acetyltransferase (306 aa).

Residue Cys142 is the Acyl-thioester intermediate of the active site. 2 residues coordinate substrate: Lys163 and Ser192. The active-site Proton acceptor is the His235. Residue Glu237 is part of the active site. A substrate-binding site is contributed by Arg249.

This sequence belongs to the MetA family.

Its subcellular location is the cytoplasm. The catalysed reaction is L-homoserine + acetyl-CoA = O-acetyl-L-homoserine + CoA. It participates in amino-acid biosynthesis; L-methionine biosynthesis via de novo pathway; O-acetyl-L-homoserine from L-homoserine: step 1/1. Transfers an acetyl group from acetyl-CoA to L-homoserine, forming acetyl-L-homoserine. This Clostridium botulinum (strain Alaska E43 / Type E3) protein is Homoserine O-acetyltransferase.